The sequence spans 335 residues: Ferrochelatase (335 aa).

Histidine 207 and glutamate 288 together coordinate Fe cation.

The protein belongs to the ferrochelatase family.

It localises to the cytoplasm. The catalysed reaction is heme b + 2 H(+) = protoporphyrin IX + Fe(2+). It participates in porphyrin-containing compound metabolism; protoheme biosynthesis; protoheme from protoporphyrin-IX: step 1/1. In terms of biological role, catalyzes the ferrous insertion into protoporphyrin IX. The sequence is that of Ferrochelatase from Helicobacter pylori (strain J99 / ATCC 700824) (Campylobacter pylori J99).